Here is a 102-residue protein sequence, read N- to C-terminus: MAKQKVRIRLKAYDHKILDQSARQIVEAAERTGALVAGPVPLPTKIEKYSVIRSPFIDKDSQEQFEIRTHKRLIDVLDPSQQTINALMKLNLPAGVDIEIKL.

It belongs to the universal ribosomal protein uS10 family. In terms of assembly, part of the 30S ribosomal subunit.

Functionally, involved in the binding of tRNA to the ribosomes. This is Small ribosomal subunit protein uS10 from Roseiflexus castenholzii (strain DSM 13941 / HLO8).